The primary structure comprises 215 residues: uncharacterized protein (215 aa).

A disordered region spans residues 25 to 48; that stretch reads LKSASPGPAPASQQASSFGSAPAQ. The span at 27–47 shows a compositional bias: low complexity; sequence SASPGPAPASQQASSFGSAPA.

This is an uncharacterized protein from Homo sapiens (Human).